The following is a 388-amino-acid chain: Succinate--CoA ligase [ADP-forming] subunit beta (388 aa).

The ATP-grasp domain maps to 9-244 (KQLFARYGLP…QSQEDPRAAQ (236 aa)). ATP-binding positions include Lys46, 53-55 (GRG), Glu99, Thr102, and Glu107. Mg(2+)-binding residues include Asn199 and Asp213. Substrate is bound by residues Asn264 and 321–323 (GIV).

The protein belongs to the succinate/malate CoA ligase beta subunit family. In terms of assembly, heterotetramer of two alpha and two beta subunits. It depends on Mg(2+) as a cofactor.

The enzyme catalyses succinate + ATP + CoA = succinyl-CoA + ADP + phosphate. The catalysed reaction is GTP + succinate + CoA = succinyl-CoA + GDP + phosphate. The protein operates within carbohydrate metabolism; tricarboxylic acid cycle; succinate from succinyl-CoA (ligase route): step 1/1. Functionally, succinyl-CoA synthetase functions in the citric acid cycle (TCA), coupling the hydrolysis of succinyl-CoA to the synthesis of either ATP or GTP and thus represents the only step of substrate-level phosphorylation in the TCA. The beta subunit provides nucleotide specificity of the enzyme and binds the substrate succinate, while the binding sites for coenzyme A and phosphate are found in the alpha subunit. This is Succinate--CoA ligase [ADP-forming] subunit beta from Shigella flexneri serotype 5b (strain 8401).